The chain runs to 292 residues: Small ribosomal subunit biogenesis GTPase RsgA (292 aa).

Residues 64 to 221 form the CP-type G domain; it reads RSELFRPAVA…LVDTPGFSSL (158 aa). GTP is bound by residues 113 to 116 and 164 to 172; these read NKMD and GPSGVGKST. Cys-245, Cys-250, His-252, and Cys-258 together coordinate Zn(2+).

It belongs to the TRAFAC class YlqF/YawG GTPase family. RsgA subfamily. In terms of assembly, monomer. Associates with 30S ribosomal subunit, binds 16S rRNA. Zn(2+) serves as cofactor.

Its subcellular location is the cytoplasm. One of several proteins that assist in the late maturation steps of the functional core of the 30S ribosomal subunit. Helps release RbfA from mature subunits. May play a role in the assembly of ribosomal proteins into the subunit. Circularly permuted GTPase that catalyzes slow GTP hydrolysis, GTPase activity is stimulated by the 30S ribosomal subunit. This Clostridium botulinum (strain Okra / Type B1) protein is Small ribosomal subunit biogenesis GTPase RsgA.